Here is a 300-residue protein sequence, read N- to C-terminus: 4-hydroxybenzoate octaprenyltransferase (300 aa).

A run of 8 helical transmembrane segments spans residues 32–52 (IGTYLLLWPTLWALWLASEGA), 55–75 (LKNLFIFVFGVLLMRSAGCVI), 108–128 (LFGILVGVSFILVLFTNALTI), 149–169 (YLPQVVLGAAFAWGIPMAFAA), 178–198 (AWLLYTATVVWTVAYDTMYAM), 222–242 (AAVAGLQVLTLGVLFMVGAQH), 246–266 (VYYQVSLIIVAVLFVYQQHLI), and 278–298 (FLNNHWVGAAVFLGLVLEFLF).

The protein belongs to the UbiA prenyltransferase family. Mg(2+) is required as a cofactor.

Its subcellular location is the cell inner membrane. It carries out the reaction all-trans-octaprenyl diphosphate + 4-hydroxybenzoate = 4-hydroxy-3-(all-trans-octaprenyl)benzoate + diphosphate. It participates in cofactor biosynthesis; ubiquinone biosynthesis. Its function is as follows. Catalyzes the prenylation of para-hydroxybenzoate (PHB) with an all-trans polyprenyl group. Mediates the second step in the final reaction sequence of ubiquinone-8 (UQ-8) biosynthesis, which is the condensation of the polyisoprenoid side chain with PHB, generating the first membrane-bound Q intermediate 3-octaprenyl-4-hydroxybenzoate. The chain is 4-hydroxybenzoate octaprenyltransferase from Hahella chejuensis (strain KCTC 2396).